Consider the following 491-residue polypeptide: UDP-N-acetylmuramate--L-alanine ligase (491 aa).

115–121 provides a ligand contact to ATP; it reads GTHGKTT.

This sequence belongs to the MurCDEF family.

The protein resides in the cytoplasm. It carries out the reaction UDP-N-acetyl-alpha-D-muramate + L-alanine + ATP = UDP-N-acetyl-alpha-D-muramoyl-L-alanine + ADP + phosphate + H(+). It functions in the pathway cell wall biogenesis; peptidoglycan biosynthesis. Its function is as follows. Cell wall formation. This Parvibaculum lavamentivorans (strain DS-1 / DSM 13023 / NCIMB 13966) protein is UDP-N-acetylmuramate--L-alanine ligase.